The chain runs to 588 residues: Progranulin (588 aa).

The signal sequence occupies residues 1–17; the sequence is MWILVSWLALVARLVAG. The N-linked (GlcNAc...) asparagine glycan is linked to N38. 12 disulfides stabilise this stretch: C125–C138, C132–C148, C281–C293, C287–C303, C294–C311, C304–C318, C312–C325, C319–C332, C363–C375, C369–C385, C394–C407, and C401–C413. N372 is a glycosylation site (N-linked (GlcNAc...) asparagine). N-linked (GlcNAc...) asparagine glycosylation occurs at N525.

This sequence belongs to the granulin family. In terms of assembly, progranulin is secreted as a homodimer. Interacts with SLPI; interaction protects progranulin from proteolysis. Interacts (via region corresponding to granulin-7 peptide) with CTSD; stabilizes CTSD and increases its proteolytic activity. Interacts (via region corresponding to granulin-7 peptide) with SORT1; this interaction mediates endocytosis and lysosome delivery of progranulin; interaction occurs at the neuronal cell surface in a stressed nervous system. Interacts with PSAP; facilitates lysosomal delivery of progranulin from the extracellular space and the biosynthetic pathway. Forms a complex with PSAP and M6PR; PSAP bridges the binding between progranulin and M6PR. Forms a complex with PSAP and SORT1; progranulin bridges the interaction between PSAP and SORT1; facilitates lysosomal targeting of PSAP via SORT1; interaction enhances PSAP uptake in primary cortical neurons. Interacts (via regions corresponding to granulin-2 and granulin-7 peptides) with GBA1; this interaction prevents aggregation of GBA1-SCARB2 complex via interaction with HSPA1A upon stress. Interacts (via region corresponding to granulin-7 peptide) with HSPA1A; mediates recruitment of HSPA1A to GBA1 and prevents GBA1 aggregation in response to stress. Post-translationally, cleaved by ELANE; proteolysis is blocked by SLPI and is concentration- and time-dependent and induces CXCL8/IL-8 production; granulin-3 and granulin-4 are resistant to ELANE. Cleaved by CTSL in lysosome thus regulating the maturation and turnover of progranulin within the lysosome. Ubiquitous; most abundant in the spleen and several tissues of endocrine significance.

The protein localises to the secreted. The protein resides in the lysosome. In terms of biological role, secreted protein that acts as a key regulator of lysosomal function and as a growth factor involved in inflammation, wound healing and cell proliferation. Regulates protein trafficking to lysosomes, and also the activity of lysosomal enzymes. Also facilitates the acidification of lysosomes, causing degradation of mature CTSD by CTSB. In addition, functions as a wound-related growth factor that acts directly on dermal fibroblasts and endothelial cells to promote division, migration and the formation of capillary-like tubule structures. Also promotes epithelial cell proliferation by blocking TNF-mediated neutrophil activation preventing release of oxidants and proteases. Moreover, modulates inflammation in neurons by preserving neurons survival, axonal outgrowth and neuronal integrity. Its function is as follows. Inhibits epithelial cell proliferation and induces epithelial cells to secrete IL-8. Functionally, stabilizes CTSD through interaction with CTSD leading to maintain its aspartic-type peptidase activity. The chain is Progranulin (Grn) from Rattus norvegicus (Rat).